A 406-amino-acid polypeptide reads, in one-letter code: Phosphopentomutase (406 aa).

Mn(2+) contacts are provided by aspartate 10, aspartate 305, histidine 310, aspartate 346, histidine 347, and histidine 358.

This sequence belongs to the phosphopentomutase family. Mn(2+) is required as a cofactor.

Its subcellular location is the cytoplasm. The catalysed reaction is 2-deoxy-alpha-D-ribose 1-phosphate = 2-deoxy-D-ribose 5-phosphate. It catalyses the reaction alpha-D-ribose 1-phosphate = D-ribose 5-phosphate. It functions in the pathway carbohydrate degradation; 2-deoxy-D-ribose 1-phosphate degradation; D-glyceraldehyde 3-phosphate and acetaldehyde from 2-deoxy-alpha-D-ribose 1-phosphate: step 1/2. In terms of biological role, isomerase that catalyzes the conversion of deoxy-ribose 1-phosphate (dRib-1-P) and ribose 1-phosphate (Rib-1-P) to deoxy-ribose 5-phosphate (dRib-5-P) and ribose 5-phosphate (Rib-5-P), respectively. This chain is Phosphopentomutase, found in Vibrio vulnificus (strain CMCP6).